The following is a 434-amino-acid chain: Probable carboxypeptidase BDBG_01803 (434 aa).

A signal peptide spans 1-20; it reads MKLSHLAAALSAQLVAPVAA. 3 N-linked (GlcNAc...) asparagine glycosylation sites follow: N35, N136, and N150. D160 is a Zn(2+) binding site. E192 serves as the catalytic Proton acceptor. E193 lines the Zn(2+) pocket. N343 carries N-linked (GlcNAc...) asparagine glycosylation.

Belongs to the peptidase M20A family. Requires Zn(2+) as cofactor.

The protein localises to the secreted. The protein is Probable carboxypeptidase BDBG_01803 of Blastomyces gilchristii (strain SLH14081) (Blastomyces dermatitidis).